The sequence spans 81 residues: LYR motif-containing protein 4 (81 aa).

It belongs to the complex I LYR family.

The protein localises to the mitochondrion. It is found in the nucleus. The protein operates within cofactor biosynthesis; iron-sulfur cluster biosynthesis. In terms of biological role, required for nuclear and mitochondrial iron-sulfur protein biosynthesis. This is LYR motif-containing protein 4 (lyrm4) from Dictyostelium discoideum (Social amoeba).